The chain runs to 114 residues: Large ribosomal subunit protein P2 (114 aa).

Low complexity predominate over residues P76–A91. The disordered stretch occupies residues P76–D114.

The protein belongs to the eukaryotic ribosomal protein P1/P2 family. As to quaternary structure, P1 and P2 exist as dimers at the large ribosomal subunit. In terms of processing, phosphorylated.

Its function is as follows. Plays an important role in the elongation step of protein synthesis. This Eimeria tenella (Coccidian parasite) protein is Large ribosomal subunit protein P2.